The sequence spans 248 residues: 2,3-bisphosphoglycerate-dependent phosphoglycerate mutase 2 (248 aa).

Substrate-binding positions include 8–15 (RHGESAWN), 21–22 (TG), arginine 60, 87–90 (EKHY), lysine 98, 114–115 (RR), and 183–184 (GN). The active-site Tele-phosphohistidine intermediate is histidine 9. Glutamate 87 (proton donor/acceptor) is an active-site residue.

The protein belongs to the phosphoglycerate mutase family. BPG-dependent PGAM subfamily.

The catalysed reaction is (2R)-2-phosphoglycerate = (2R)-3-phosphoglycerate. Its pathway is carbohydrate degradation; glycolysis; pyruvate from D-glyceraldehyde 3-phosphate: step 3/5. Its function is as follows. Catalyzes the interconversion of 2-phosphoglycerate and 3-phosphoglycerate. This Bacteroides thetaiotaomicron (strain ATCC 29148 / DSM 2079 / JCM 5827 / CCUG 10774 / NCTC 10582 / VPI-5482 / E50) protein is 2,3-bisphosphoglycerate-dependent phosphoglycerate mutase 2.